The following is a 159-amino-acid chain: Cyclic pyranopterin monophosphate synthase (159 aa).

Residues 74–76 and 112–113 contribute to the substrate site; these read MCH and ME. Asp-127 is a catalytic residue.

It belongs to the MoaC family. In terms of assembly, homohexamer; trimer of dimers.

The catalysed reaction is (8S)-3',8-cyclo-7,8-dihydroguanosine 5'-triphosphate = cyclic pyranopterin phosphate + diphosphate. It functions in the pathway cofactor biosynthesis; molybdopterin biosynthesis. Its function is as follows. Catalyzes the conversion of (8S)-3',8-cyclo-7,8-dihydroguanosine 5'-triphosphate to cyclic pyranopterin monophosphate (cPMP). This Helicobacter hepaticus (strain ATCC 51449 / 3B1) protein is Cyclic pyranopterin monophosphate synthase.